The following is a 355-amino-acid chain: Probable aldo-keto reductase 3 (355 aa).

Y70 serves as the catalytic Proton donor. H138 provides a ligand contact to substrate. 217–227 (SPLGRGFFSSG) is a binding site for NADP(+).

This sequence belongs to the aldo/keto reductase family.

The sequence is that of Probable aldo-keto reductase 3 from Oryza sativa subsp. indica (Rice).